A 700-amino-acid polypeptide reads, in one-letter code: Mei4-dependent protein 6 (700 aa).

Kelch repeat units follow at residues 276 to 322, 327 to 381, 390 to 439, 452 to 499, 508 to 558, and 569 to 619; these read CIYL…MVID, KLYL…FDHG, IVYV…KIER, KLYI…FCQR, RIFT…SRFG, and IIYL…RFHE.

This Schizosaccharomyces pombe (strain 972 / ATCC 24843) (Fission yeast) protein is Mei4-dependent protein 6 (mde6).